A 410-amino-acid chain; its full sequence is Argininosuccinate synthase (410 aa).

6–14 is a binding site for ATP; it reads AYSGGLDTS. Tyr-84 is an L-citrulline binding site. Gly-114 contributes to the ATP binding site. 3 residues coordinate L-aspartate: Thr-116, Asn-120, and Asp-121. Asn-120 lines the L-citrulline pocket. L-citrulline contacts are provided by Arg-124, Ser-169, Ser-178, Glu-254, and Tyr-266.

The protein belongs to the argininosuccinate synthase family. Type 1 subfamily. In terms of assembly, homotetramer.

The protein localises to the cytoplasm. The catalysed reaction is L-citrulline + L-aspartate + ATP = 2-(N(omega)-L-arginino)succinate + AMP + diphosphate + H(+). It functions in the pathway amino-acid biosynthesis; L-arginine biosynthesis; L-arginine from L-ornithine and carbamoyl phosphate: step 2/3. The sequence is that of Argininosuccinate synthase from Pyrococcus furiosus (strain ATCC 43587 / DSM 3638 / JCM 8422 / Vc1).